Consider the following 468-residue polypeptide: 5-carboxymethyl-2-hydroxymuconate semialdehyde dehydrogenase (468 aa).

Glu244 is a catalytic residue. The active-site Nucleophile is Cys278.

It belongs to the aldehyde dehydrogenase family. In terms of assembly, homodimer.

It catalyses the reaction 2-hydroxy-5-carboxymethylmuconate semialdehyde + NAD(+) + H2O = (2E,4Z)-5-hydroxypenta-2,4-diene-1,2,5-tricarboxylate + NADH + 2 H(+). It functions in the pathway aromatic compound metabolism; 4-hydroxyphenylacetate degradation; pyruvate and succinate semialdehyde from 4-hydroxyphenylacetate: step 3/7. In terms of biological role, catalyzes the conversion of 5-carboxymethyl-2-hydroxy-muconic semialdehyde (CHMS) into 5-carboxymethyl-2-hydroxy-muconic acid (CHM or (2E,4Z)-5-hydroxypenta-2,4-diene-1,2,5-tricarboxylate). Is involved in a meta-cleavage pathway for the catabolism of 4-hydroxyphenylacetate (4-HPA) via homoprotocatechuate (HPC or 3,4-dihydroxyphenylacetate). This chain is 5-carboxymethyl-2-hydroxymuconate semialdehyde dehydrogenase, found in Escherichia coli.